We begin with the raw amino-acid sequence, 242 residues long: Ubiquinone biosynthesis O-methyltransferase (242 aa).

S-adenosyl-L-methionine contacts are provided by R44, G64, D85, and M129.

It belongs to the methyltransferase superfamily. UbiG/COQ3 family.

It catalyses the reaction a 3-demethylubiquinol + S-adenosyl-L-methionine = a ubiquinol + S-adenosyl-L-homocysteine + H(+). The enzyme catalyses a 3-(all-trans-polyprenyl)benzene-1,2-diol + S-adenosyl-L-methionine = a 2-methoxy-6-(all-trans-polyprenyl)phenol + S-adenosyl-L-homocysteine + H(+). The protein operates within cofactor biosynthesis; ubiquinone biosynthesis. Its function is as follows. O-methyltransferase that catalyzes the 2 O-methylation steps in the ubiquinone biosynthetic pathway. The protein is Ubiquinone biosynthesis O-methyltransferase of Yersinia enterocolitica serotype O:8 / biotype 1B (strain NCTC 13174 / 8081).